A 149-amino-acid chain; its full sequence is Transcriptional repressor NrdR (149 aa).

The segment at 3–34 is a zinc-finger region; sequence CPFCSHLETQVIETRVFEDAASIRRRRQCAAC. The ATP-cone domain occupies 49–139; sequence PAVVKKDGRR…VYRSFEGIDD (91 aa).

The protein belongs to the NrdR family. The cofactor is Zn(2+).

Functionally, negatively regulates transcription of bacterial ribonucleotide reductase nrd genes and operons by binding to NrdR-boxes. This Verminephrobacter eiseniae (strain EF01-2) protein is Transcriptional repressor NrdR.